A 482-amino-acid chain; its full sequence is Chitobiosyldiphosphodolichol beta-mannosyltransferase (482 aa).

The Lumenal portion of the chain corresponds to 1-2 (MA). The chain crosses the membrane as a helical span at residues 3–23 (ASCVALLVLALLLLVLLLGLW). The Cytoplasmic portion of the chain corresponds to 24–99 (KRGRQTGRAR…DLRGLGAGPR (76 aa)). The helical intramembrane region spans 100–120 (ILQYGVKVVFQAVYLLWKMMR). Over 121–482 (MDPAAYIFLQ…PCGHPSCRGF (362 aa)) the chain is Cytoplasmic. Ser242 is modified (phosphoserine).

It belongs to the glycosyltransferase group 1 family. Glycosyltransferase 33 subfamily.

It localises to the endoplasmic reticulum membrane. The enzyme catalyses an N,N'-diacetylchitobiosyl-diphospho-di-trans,poly-cis-dolichol + GDP-alpha-D-mannose = a beta-D-Man-(1-&gt;4)-beta-D-GlcNAc-(1-&gt;4)-alpha-D-GlcNAc-diphospho-di-trans,poly-cis-dolichol + GDP + H(+). The protein operates within protein modification; protein glycosylation. In terms of biological role, mannosyltransferase that operates in the biosynthetic pathway of dolichol-linked oligosaccharides, the glycan precursors employed in protein asparagine (N)-glycosylation. The assembly of dolichol-linked oligosaccharides begins on the cytosolic side of the endoplasmic reticulum membrane and finishes in its lumen. The sequential addition of sugars to dolichol pyrophosphate produces dolichol-linked oligosaccharides containing fourteen sugars, including two GlcNAcs, nine mannoses and three glucoses. Once assembled, the oligosaccharide is transferred from the lipid to nascent proteins by oligosaccharyltransferases. Catalyzes, on the cytoplasmic face of the endoplasmic reticulum, the addition of the first mannose residues to the dolichol-linked oligosaccharide chain, to produce Man1GlcNAc(2)-PP-dolichol core oligosaccharide. Man1GlcNAc(2)-PP-dolichol is a substrate for ALG2, the following enzyme in the biosynthetic pathway. This chain is Chitobiosyldiphosphodolichol beta-mannosyltransferase, found in Mus musculus (Mouse).